Consider the following 321-residue polypeptide: MTSKLDQLREITTVVADTGDIEAVARLKPVDCTTNPSIVLKALGTPMFADAIKEAVAWGKTQGGNPEAVSSAVADRLAISVGAALVKLVPGRVSTEVDADLSFDTEASLAKARSIIAAYKDRGIERDRILIKLASTWEGIRAAEVLQKEGIDCNLTLLFSKAQAIACADAKVFLISPFVGRILDWYKKSTGKDYTAEEDPGVISVRDIYNYYKANDIKTIVMGASFRNAGEIEALAGCDRLTISPALLDELAKDEGKLERKLSPESRKPDAKVSVDEKTFRWMMNEDAMATEKLAEGIRAFAKDLTTLRTMVQKELQLAAA.

K132 functions as the Schiff-base intermediate with substrate in the catalytic mechanism.

The protein belongs to the transaldolase family. Type 1 subfamily. Homodimer.

Its subcellular location is the cytoplasm. The catalysed reaction is D-sedoheptulose 7-phosphate + D-glyceraldehyde 3-phosphate = D-erythrose 4-phosphate + beta-D-fructose 6-phosphate. It functions in the pathway carbohydrate degradation; pentose phosphate pathway; D-glyceraldehyde 3-phosphate and beta-D-fructose 6-phosphate from D-ribose 5-phosphate and D-xylulose 5-phosphate (non-oxidative stage): step 2/3. Functionally, transaldolase is important for the balance of metabolites in the pentose-phosphate pathway. The chain is Transaldolase from Rhizobium etli (strain CIAT 652).